A 412-amino-acid polypeptide reads, in one-letter code: DnaJ homolog subfamily A member 2 (412 aa).

The 63-residue stretch at 8–70 (KLYDILGVPP…EKRELYDRYG (63 aa)) folds into the J domain. At Lys39 the chain carries N6-acetyllysine. 2 positions are modified to phosphoserine: Ser78 and Ser123. The CR-type zinc-finger motif lies at 130–214 (GKTTKLQLSK…CEGKKVIKEV (85 aa)). Lys134 is covalently cross-linked (Glycyl lysine isopeptide (Lys-Gly) (interchain with G-Cter in SUMO2)). Zn(2+) is bound by residues Cys143 and Cys146. A CXXCXGXG motif repeat occupies 143-150 (CSACSGQG). Lys152 is subject to N6-acetyllysine. Cys159, Cys162, Cys186, Cys189, Cys202, and Cys205 together coordinate Zn(2+). CXXCXGXG motif repeat units follow at residues 159 to 166 (CSACRGRG), 186 to 193 (CSDCNGEG), and 202 to 209 (CKKCEGKK). Residues 365–412 (IGETEEVELQEFDSTRGSGGGQRREAYNDSSDEESSSHHGPGVQCAHQ) are disordered. The residue at position 391 (Tyr391) is a Phosphotyrosine. 2 positions are modified to phosphoserine: Ser394 and Ser395. Cys409 carries the cysteine methyl ester modification. Cys409 carries the S-farnesyl cysteine lipid modification. Residues 410–412 (AHQ) constitute a propeptide, removed in mature form.

Its subcellular location is the membrane. Its function is as follows. Co-chaperone of Hsc70. Stimulates ATP hydrolysis and the folding of unfolded proteins mediated by HSPA1A/B (in vitro). In Homo sapiens (Human), this protein is DnaJ homolog subfamily A member 2 (DNAJA2).